Reading from the N-terminus, the 307-residue chain is Ribonuclease Z (307 aa).

Histidine 63, histidine 65, aspartate 67, histidine 68, histidine 140, aspartate 211, and histidine 269 together coordinate Zn(2+). Aspartate 67 (proton acceptor) is an active-site residue.

It belongs to the RNase Z family. In terms of assembly, homodimer. Requires Zn(2+) as cofactor.

It carries out the reaction Endonucleolytic cleavage of RNA, removing extra 3' nucleotides from tRNA precursor, generating 3' termini of tRNAs. A 3'-hydroxy group is left at the tRNA terminus and a 5'-phosphoryl group is left at the trailer molecule.. In terms of biological role, zinc phosphodiesterase, which displays some tRNA 3'-processing endonuclease activity. Probably involved in tRNA maturation, by removing a 3'-trailer from precursor tRNA. The chain is Ribonuclease Z from Bacillus licheniformis (strain ATCC 14580 / DSM 13 / JCM 2505 / CCUG 7422 / NBRC 12200 / NCIMB 9375 / NCTC 10341 / NRRL NRS-1264 / Gibson 46).